A 561-amino-acid chain; its full sequence is Putative transport protein AHA_2450 (561 aa).

A run of 5 helical transmembrane segments spans residues 8 to 28, 37 to 57, 66 to 86, 90 to 110, and 161 to 181; these read LLHQ…LLLG, IGNT…GFEF, FMLF…SVFL, IHYI…TVGL, and NMGI…MLVV. RCK C-terminal domains follow at residues 206-291 and 293-376; these read SDNE…NYRN and KEVF…KIGF. The next 5 membrane-spanning stretches (helical) occupy residues 386–406, 409–429, 450–470, 476–496, and 541–561; these read LVAF…SLVF, LEFG…MGYL, LGLA…ILDH, AVVL…GYLF, and TYAV…GFWF.

The protein belongs to the AAE transporter (TC 2.A.81) family. YbjL subfamily.

Its subcellular location is the cell membrane. This is Putative transport protein AHA_2450 from Aeromonas hydrophila subsp. hydrophila (strain ATCC 7966 / DSM 30187 / BCRC 13018 / CCUG 14551 / JCM 1027 / KCTC 2358 / NCIMB 9240 / NCTC 8049).